A 291-amino-acid chain; its full sequence is uncharacterized protein (291 aa).

Essential for virus function. This is an uncharacterized protein from Sulfolobus spindle-shape virus 1 (SSV1).